The chain runs to 782 residues: MLAEPVPDALEQEHPGAVKLEEDEVGEEDPRLAESRPRPEVAHQLFRCFQYQEDMGPRASLGRLRELCNHWLRPALHTKKQILELLVLEQFLSVLPPHVLSRLHGQPLRDGEEVVQLLEGVPRDISHMGPLDFSFSAGKNAPADIISEEQNSPSQVPSHSPQTELPSEEIPALHPLNELPPPQPAPIRPAEPEEWRLAPSSNWPMSPEPQEILQDPRESNPSQGPSWLEENSRDQELAAVLESLTFEDTSEKRAWPANPLGFGSRMPDNEELKVEEPKVTTWPVVIGAESQTEKPEVAGEPLTQTVGQETSSTGWGGTPADGSEVVKVRGASDAPEPQGEMQFICTYCGVNFPEMSHLQAHQLQSHPNLQPHPSSRSFRCLWCGKTFGRSSILKLHMRTHTDERPHACHLCNRRFRQSSHLTKHLLTHSSEPAFRCAECNQGFQRRSSLMQHLLAHAQGKNLTPNPEGKTKVPEMAAVLCSHCGQTFKRRSSLKRHLRNHAKDKDHLSSEDPGSLSSSQESNPYVCSDCGKAFRQSEQLMIHTRRVHTRERPFSCQVCGRCFTQNSQLISHQQIHTGEKPHACPQCSKRFVRRAGLARHLLTHGSLRPYHCAQCGKSFRQMRDLTRHVRCHTGEKPCRCNECGEGFTQNAHLARHQRIHTGEKPHACDICGHRFRNSSNLARHRRSHTGERPYSCPTCGRSFRRNAHLQRHLITHTGSKQEKEVPQECPECGKSFNRSCNLLRHLLVHTGARPYSCALCGRSFSRNSHLLRHLRTHARESLY.

The interval 1–37 (MLAEPVPDALEQEHPGAVKLEEDEVGEEDPRLAESRP) is disordered. Residues 1–71 (MLAEPVPDAL…GRLRELCNHW (71 aa)) enclose the SCAN box domain. Composition is skewed to basic and acidic residues over residues 11–20 (EQEHPGAVKL) and 28–37 (EDPRLAESRP). Phosphoserine is present on residues Ser160 and Ser206. Disordered stretches follow at residues 197-233 (LAPSSNWPMSPEPQEILQDPRESNPSQGPSWLEENSR) and 290-321 (SQTEKPEVAGEPLTQTVGQETSSTGWGGTPAD). 14 consecutive C2H2-type zinc fingers follow at residues 292–315 (TEKPEVAGEPLTQTVGQETSSTGW), 321–343 (DGSEVVKVRGASDAPEPQGEMQF), 349–371 (GVNFPEMSHLQAHQLQSHPNLQP), 377–399 (SFRCLWCGKTFGRSSILKLHMRT), 421–443 (LTKHLLTHSSEPAFRCAECNQGF), 467–489 (EGKTKVPEMAAVLCSHCGQTFKR), 495–517 (RHLRNHAKDKDHLSSEDPGSLSS), 523–545 (PYVCSDCGKAFRQSEQLMIHTRR), 551–573 (RPFSCQVCGRCFTQNSQLISHQQ), 579–601 (KPHACPQCSKRFVRRAGLARHLL), 607–629 (RPYHCAQCGKSFRQMRDLTRHVR), 635–657 (KPCRCNECGEGFTQNAHLARHQR), 669–691 (ICGHRFRNSSNLARHRRSHTGER), and 697–719 (TCGRSFRRNAHLQRHLITHTGSK). Over residues 302–313 (LTQTVGQETSST) the composition is skewed to polar residues. An N5-methylglutamine modification is found at Gln485. A disordered region spans residues 491 to 522 (SSLKRHLRNHAKDKDHLSSEDPGSLSSSQESN). Basic and acidic residues predominate over residues 500-509 (HAKDKDHLSS). Low complexity predominate over residues 510-521 (EDPGSLSSSQES).

As to quaternary structure, interacts with POU5F1/OCT4 and SOX2. Post-translationally, methylated at Gln-485 by N6AMT1. As to expression, embryonic stem (ES) cell-specific. Not expressed in adult, except in testis.

It is found in the nucleus. In terms of biological role, embryonic stem (ES) cell-specific transcription factor required to maintain ES cell pluripotency. Can both activate and /or repress expression of target genes, depending on the context. Specifically binds the 5'-[GA]CGCNNGCG[CT]-3' DNA consensus sequence. Regulates expression of POU5F1/OCT4, ZSCAN4 and ALYREF/THOC4. The chain is Zinc finger and SCAN domain-containing protein 10 (Zscan10) from Mus musculus (Mouse).